The sequence spans 91 residues: N.vectensis toxin 8 (91 aa).

An N-terminal signal peptide occupies residues 1 to 26; sequence MNSLLKVAVVCLVMLVACFVPRVILT. 3 disulfide bridges follow: Cys45–Cys76, Cys47–Cys67, and Cys60–Cys77.

In terms of tissue distribution, expressed in ectodermal gland cells.

Has toxic effects on zebrafish larvae. It causes contractile paralysis and twitching of the tail within 20 minutes, followed by death within 30 minutes. Does not show any toxicity when injected into arthropods (cherry shrimps or grass shrimps). The sequence is that of N.vectensis toxin 8 from Nematostella vectensis (Starlet sea anemone).